Here is a 132-residue protein sequence, read N- to C-terminus: Small ribosomal subunit protein uS8 (132 aa).

Belongs to the universal ribosomal protein uS8 family. As to quaternary structure, part of the 30S ribosomal subunit. Contacts proteins S5 and S12.

In terms of biological role, one of the primary rRNA binding proteins, it binds directly to 16S rRNA central domain where it helps coordinate assembly of the platform of the 30S subunit. This Borrelia turicatae (strain 91E135) protein is Small ribosomal subunit protein uS8.